We begin with the raw amino-acid sequence, 472 residues long: Pentatricopeptide repeat-containing protein At5g46100 (472 aa).

PPR repeat units lie at residues 50 to 84 (DQSS…NCVV), 85 to 119 (SEDI…DCDP), 120 to 154 (SQKA…GLPP), 155 to 190 (TVAS…GCDP), 191 to 225 (DSYT…DCAP), 226 to 260 (TVVT…GIEP), 261 to 295 (NVFT…GCRP), 296 to 330 (NMVT…GLKP), 331 to 365 (DAGL…GITP), 373 to 406 (HVKT…GISV), and 407 to 441 (EVET…GCIP).

Belongs to the PPR family. P subfamily.

The chain is Pentatricopeptide repeat-containing protein At5g46100 from Arabidopsis thaliana (Mouse-ear cress).